Reading from the N-terminus, the 221-residue chain is Fanconi anemia core complex-associated protein 24 (221 aa).

As to quaternary structure, belongs to the multisubunit FA complex composed of FANCA, FANCB, FANCC, FANCE, FANCF, FANCG, FANCL/PHF9, FANCM and FAAP24. Interacts with FANCM.

The protein localises to the nucleus. Its function is as follows. Plays a role in DNA repair through recruitment of the FA core complex to damaged DNA. Regulates FANCD2 monoubiquitination upon DNA damage. Induces chromosomal instability as well as hypersensitivity to DNA cross-linking agents, when repressed. Targets FANCM/FAAP24 complex to the DNA, preferentially to single strand DNA. This Mus musculus (Mouse) protein is Fanconi anemia core complex-associated protein 24.